The sequence spans 376 residues: 26S proteasome non-ATPase regulatory subunit 4 (376 aa).

Residues 5–188 (STMVCVDNSE…LADALISSPI (184 aa)) form the VWFA domain. Residue lysine 122 forms a Glycyl lysine isopeptide (Lys-Gly) (interchain with G-Cter in SUMO2) linkage. The interaction with UBQLN1 stretch occupies residues 197–262 (LGLGASDFEF…TEDSDDALLK (66 aa)). In terms of domain architecture, UIM 1 spans 211–230 (SADPELALALRVSMEEQRQR). Over residues 224–237 (MEEQRQRQEEEARR) the composition is skewed to basic and acidic residues. The disordered stretch occupies residues 224–257 (MEEQRQRQEEEARRAAAASAAEAGIATPGTEDSD). Phosphothreonine occurs at positions 250 and 253. Phosphoserine is present on residues serine 256 and alanine 259. Residues 282–301 (TEEEQIAYAMQMSLQGTEFS) enclose the UIM 2 domain. Residues 355 to 376 (MGALASQATKDGKNDKKEEEKK) form a disordered region. Serine 360 is subject to Phosphoserine. Residues 364–376 (KDGKNDKKEEEKK) are compositionally biased toward basic and acidic residues.

It belongs to the proteasome subunit S5A family. As to quaternary structure, component of the 19S proteasome regulatory particle complex. The 26S proteasome consists of a 20S core particle (CP) and two 19S regulatory subunits (RP). The regulatory particle is made of a lid composed of 9 subunits, a base containing 6 ATPases and few additional components including PSMD4. Interacts with NUB1. Interacts with SQSTM1. Interacts with UBQLN4. Interacts with UBE3A. Interacts with UBQLN1 (via ubiquitin-like domain). Interacts with DDI2. In terms of tissue distribution, isoform Rpn10A is ubiquitous whereas isoform Rpn10E is mostly expressed in the embryonic brain.

Its function is as follows. Component of the 26S proteasome, a multiprotein complex involved in the ATP-dependent degradation of ubiquitinated proteins. This complex plays a key role in the maintenance of protein homeostasis by removing misfolded or damaged proteins, which could impair cellular functions, and by removing proteins whose functions are no longer required. Therefore, the proteasome participates in numerous cellular processes, including cell cycle progression, apoptosis, or DNA damage repair. PSMD4 acts as an ubiquitin receptor subunit through ubiquitin-interacting motifs and selects ubiquitin-conjugates for destruction. Displays a preferred selectivity for longer polyubiquitin chains. This chain is 26S proteasome non-ATPase regulatory subunit 4 (Psmd4), found in Mus musculus (Mouse).